We begin with the raw amino-acid sequence, 950 residues long: Glycine dehydrogenase (decarboxylating) 1 (950 aa).

Residue Lys704 is modified to N6-(pyridoxal phosphate)lysine.

Belongs to the GcvP family. The glycine cleavage system is composed of four proteins: P, T, L and H. It depends on pyridoxal 5'-phosphate as a cofactor.

The enzyme catalyses N(6)-[(R)-lipoyl]-L-lysyl-[glycine-cleavage complex H protein] + glycine + H(+) = N(6)-[(R)-S(8)-aminomethyldihydrolipoyl]-L-lysyl-[glycine-cleavage complex H protein] + CO2. Its function is as follows. The glycine cleavage system catalyzes the degradation of glycine. The P protein binds the alpha-amino group of glycine through its pyridoxal phosphate cofactor; CO(2) is released and the remaining methylamine moiety is then transferred to the lipoamide cofactor of the H protein. The sequence is that of Glycine dehydrogenase (decarboxylating) 1 from Pseudomonas fluorescens (strain Pf0-1).